We begin with the raw amino-acid sequence, 398 residues long: MFIKRKLKETEIKDFTLNFGPQHPAAHGVLRLILELNGETIKNADPHIGLLHRGTEKLIENRNYLQALPYFDRLDYVSMMVQEHAYSLAVERLYGINIPQRAQWIRVLFSEITRILNHLLAIGCHSMDVGAMTPLLWGFEEREKLMEFYERVSGARMHASYIRPGGVAQDLPSGFVEDVYSFILDFSVRLDEIEELLTNNRIWKQRLVNVGIVTAKQAIQNGFSGVLLRSTGIPWDLRRSQPYEIYDKVPFRIPVGTRGDCYDRYLIRMQEMRQSLRIMMACLKYLPGGSIKSDDKKFVPPLRWEMKNSMESVIHHFKYFTEGFKVPAGQTYAAVEAPKGEMGVFLISDGSNQPFRCKIKAPGFFHLQNLPEMTKHHMIADVVTIIGTQDIVFGEVDR.

Belongs to the complex I 49 kDa subunit family.

It is found in the mitochondrion. The catalysed reaction is a ubiquinone + NADH + 5 H(+)(in) = a ubiquinol + NAD(+) + 4 H(+)(out). In terms of biological role, core subunit of the mitochondrial membrane respiratory chain NADH dehydrogenase (Complex I) that is believed to belong to the minimal assembly required for catalysis. Complex I functions in the transfer of electrons from NADH to the respiratory chain. The immediate electron acceptor for the enzyme is believed to be ubiquinone. Component of the iron-sulfur (IP) fragment of the enzyme. Component of the iron-sulfur (IP) fragment of the enzyme. This Cafeteria roenbergensis (Marine flagellate) protein is NADH-ubiquinone oxidoreductase 49 kDa subunit (NAD7).